An 807-amino-acid polypeptide reads, in one-letter code: Glycerol-3-phosphate acyltransferase (807 aa).

An HXXXXD motif motif is present at residues 308-313; that stretch reads CHRSHM.

This sequence belongs to the GPAT/DAPAT family.

It localises to the cell inner membrane. The enzyme catalyses sn-glycerol 3-phosphate + an acyl-CoA = a 1-acyl-sn-glycero-3-phosphate + CoA. It participates in phospholipid metabolism; CDP-diacylglycerol biosynthesis; CDP-diacylglycerol from sn-glycerol 3-phosphate: step 1/3. This is Glycerol-3-phosphate acyltransferase from Shewanella frigidimarina (strain NCIMB 400).